An 85-amino-acid chain; its full sequence is MAVIKAVDMSEKMQQEAIHAAVQAMEKFTIEKDIAAFIKREFDKKFSPTWHCIVGRNFGSFVTHESRHFIYFYLGTVAFLLFKSG.

Belongs to the dynein light chain family. In terms of assembly, homodimer. Cytoplasmic dynein consists of two catalytic heavy chains (HCs) and a number of non-catalytic subunits which present intermediate chains (ICs), light intermediate chains (LICs) and light chains (LCs). Component of the nuclear pore complex (NPC). NPC constitutes the exclusive means of nucleocytoplasmic transport. NPCs allow the passive diffusion of ions and small molecules and the active, nuclear transport receptor-mediated bidirectional transport of macromolecules such as proteins, RNAs, ribonucleoparticles (RNPs), and ribosomal subunits across the nuclear envelope. Due to its 8-fold rotational symmetry, all subunits are present with 8 copies or multiples thereof.

The protein resides in the cytoplasm. It localises to the cytoskeleton. The protein localises to the nucleus. Its subcellular location is the nuclear pore complex. Functionally, acts as one of several non-catalytic accessory components of the cytoplasmic dynein complex that are thought to be involved in linking dynein to cargos and to adapter proteins that regulate dynein function. Cytoplasmic dynein 1 acts as a motor for the intracellular retrograde motility of vesicles and organelles along microtubules. May play a role in changing or maintaining the spatial distribution of cytoskeletal structures. Also a component of the nuclear pore complex. The polypeptide is Dynein light chain 1, cytoplasmic (dlc2) (Schizosaccharomyces pombe (strain 972 / ATCC 24843) (Fission yeast)).